Here is a 368-residue protein sequence, read N- to C-terminus: DNA replication and repair protein RecF (368 aa).

30–37 (GNNAQGKT) contributes to the ATP binding site.

This sequence belongs to the RecF family.

The protein resides in the cytoplasm. The RecF protein is involved in DNA metabolism; it is required for DNA replication and normal SOS inducibility. RecF binds preferentially to single-stranded, linear DNA. It also seems to bind ATP. The protein is DNA replication and repair protein RecF of Streptococcus pyogenes serotype M18 (strain MGAS8232).